The primary structure comprises 388 residues: 4-hydroxy-3-methylbut-2-en-1-yl diphosphate synthase (flavodoxin) (388 aa).

Residues C280, C283, C315, and E322 each contribute to the [4Fe-4S] cluster site. Positions 369–388 (MNSEGGPEATSSGSPVVTVS) are disordered. Polar residues predominate over residues 377–388 (ATSSGSPVVTVS).

Belongs to the IspG family. The cofactor is [4Fe-4S] cluster.

The enzyme catalyses (2E)-4-hydroxy-3-methylbut-2-enyl diphosphate + oxidized [flavodoxin] + H2O + 2 H(+) = 2-C-methyl-D-erythritol 2,4-cyclic diphosphate + reduced [flavodoxin]. It functions in the pathway isoprenoid biosynthesis; isopentenyl diphosphate biosynthesis via DXP pathway; isopentenyl diphosphate from 1-deoxy-D-xylulose 5-phosphate: step 5/6. Converts 2C-methyl-D-erythritol 2,4-cyclodiphosphate (ME-2,4cPP) into 1-hydroxy-2-methyl-2-(E)-butenyl 4-diphosphate. The chain is 4-hydroxy-3-methylbut-2-en-1-yl diphosphate synthase (flavodoxin) from Mycolicibacterium paratuberculosis (strain ATCC BAA-968 / K-10) (Mycobacterium paratuberculosis).